The chain runs to 3550 residues: METCDSPPISRQENGQSTSKLCGMTQLDNEVPEKVAGIEPDRENSSSHDNLKTDERKSEVLLGFSIENAAATQVTSAKEIPCNECATSFPSLQKYMEHHCPNARLPVLKDDESETSELEDSDVENLTGEIVYQPDGSAYIIEDSKESGQNAQTGANSKLFSTAMFLDSLASAGEKSDQSSTAPVSFYPQIINTFHIASSLGKPFTADPAFPNTSALAGVGPVLHSFRVYDLRHKREKDYLTSDGSAKNSCVSKDVPNNVDLSKFDGCVSDGKRKPVLMCFLCKLSFGYIRSFVTHAVHDHRMTLNDEERRLLSNKCVSAIIQGIGKDKEPLISFLEPKKSTSVYPNFSTTNLIGPDPTFRGLWSAFHVENGDSLQAGFAFLKGSASPSSSAEQPLGITHMPKAEVNLGGLSSLVVNTPITSVSLSHLSSESSKMSESKDQENNCERPKESTILHPNVGCPVKSEPTEPGDEDEEDAYSNELDDEEVLGELTDSIGNKDFPLLNQSISPLSSSVLKFIEKGTSSSSGTIAEDTEKKKQAAATGRSNGNVTNSYSIGGKDFADGSISRDGTTAAPSETTHGDEDSSTTHQHGFTPSTPGTPGPGGDGSPGNGIECPKCDTVLGSSRSLGGHMTMMHSRNSCKTLKCPKCNWHYKYQQTLEAHMKEKHPEPGGSCVYCKTGQPHPRLARGESYTRGYKPFRCEVCNYSTTTKGNLSIHMQSDKHLNNVQNLQNGNGEQVFGHSAPTPNTSLSGCGTPSPSKPKQKPTRRCEVCDYETNVARNLRIHMTSEKHMHNMMLLQQNMKQIQHNLHLGLAPAEAELYQYYLAQNIGLTGMKLENPAETQLLLNPFQFDSATAAALAPGLGELSPYISDPALKLFQCAVCNKFTSDSLEALSVHVNSERSLPEEEWRAVIGDIYQCKLCNYNTQLKANFQLHCKTDKHMQKYQLVAHIKEGGKSNEWRLKCIAIGNPVHLKCNACDYYTNSVDKLRLHTTNHRHEAALKLYKHLQKQEGAVNSESCCYYCAVCDYSSKIKLNLVQHVRSVKHQQTEGLRKLQLHQQGLPSEEDNLSEIFFVKECPANELETASLGARNGEDELIEQQLKAASEEPSEDAGDPLKPPTVAEDDEKEAHKRDNSEGKISTKDPEVIVPEKEPKVVTGATQPLLLAKEDSTGTKRSKPTEDNKFCPEQFYQYPCCNYNSRDQSRIQMHVLSQHSVQPVICCPLCQDVLSNKMHLQLHLTHLHSVSPDCVEKLLMTVPVPDVMMLNSMLLPAAAPEKSEQDPPTALTAEGSGKCSGDGPVDDKSMSGLEDSKVGVEIKNEEQKPAKEPVEASEWNKTSSKDVNISDALQDQLNEQQKRQPLSVSDRHVYKYRCNHCSLAFKTMQKLQIHSQYHAIRAATMCTLCQRSFRTFQALKKHLEAGHPELSEAELQQLYASLPMNGELWAESETMTQDDHGIDQEMEREYEVDHEGKASPVESDGSSIPDDLGLEPKRTLPFRKGPNFTMEKFLDPSRPYKCTVCKESFTQKNILLVHYNSVSHLHKLKKVLQEASSPVPQEANSSTDNKPYKCSTCSVAYSQSSTLEIHMRSVLHQTKARAAKLEPSRHLPSGHSITAAVNSPGQGMLESMSLASVNSKDTHLDAKELNKKQTPELISAQPTHHPPPRSPAQIQMQLQHELQQQAAFFQPQFLNPAFLPHFPMTPEALLQFQQPQFLFPFYIPGAEFSLGPDLGLPTSTTFGVPGMTGMAGSLLEDLKQQIQTQHHVGQTQLQFLQQAQQYQAVQPQLQPQNQQPPLPQQQQPQQQPSKLLKQEQGSLASTDCQLMKDMPSYKEAEEVTEKQEKPKQEFINDTEGLKDSKDIKKQKSLEPCIPPPRIASGARGNAAKALLENFGFELVIQYNENRQKVQKKGKSGEGENSDKLECGICGKLFSNVLILKSHQEHVHGQFFPYGALEKFARQYREAYDKLIQFLLPPLPPAPPQPSTLGPVKIPNTVSAPLQAPPPTPPSAPQQVQLPVSLDLPLFPSIMMQPVQHPALPPQLALQLPQMDTLSADLTQLCQQQLGIDPNFLRHSQFKRPRTRITDDQLKILRAYFDINNSPSEEQIQEMAEKSGLSQKVVKHWFRNTLFKERQRNKDSPYNFSNPPITVLEDIRIDPQPTSLEHYKSDAAFSKRSSRTRFTDYQLRVLQDFFDTNAYPKDDEIEQLSTVLNLPTRVIVVWFQNARQKARKSYENQAEAKDNEKRELTNERYIRTSNMQYQCKKCNVVFPRIFDLITHQKKQCYKDEDDDAQDESQTEDSMDATDQVLYKHCMVSGQTDTAKSTATLVASSGSGTSTPLIPSPKPEPEKNSPKTEYPGEKTKQSDPSLPQGTKSAPSSVLTSSEPQQASIPQPPTQPPKQPQLIGRPPSASQTPIPSSPLQISMTSLQNSLPPQLLQYPCDQCTLAFPTLELWKEHQHMHFLAAQNQFLHSPFLERPMDMPYMIFDPNNPLMTGQLLGSSLTQMPPQTSTAHTTAPASVAASLKRKLEDKEDNNCSEKEGGNSGEDQHRDKRLRTTITPEQLEILYEKYLLDSNPTRKMLDHIAREVGLKKRVVQVWFQNTRARERKGQFRAVGPAQSHKRCPFCRALFKAKSALESHIRSRHWNEGKQAGYSLPPSPLISTEDGGESPQKYIYFDYPSLPLTKIDLSTENELASTVSTPVSKTAELSPKNLLSPSSFKAECPEDVENLNAPSADAGYDQSKTDFDETSSINTAISDATTGDEGAADMENTGGSGEVKPALSPKETKTLDSLQKPATTPTTEVCDDKFLFSLTSPSIHFNDKDGDHDQSFYITDDPDDNADRSETSSIADPSSPNPFGSSNPFKSKSNDRPGHKRFRTQMSNLQLKVLKACFSDYRTPTMQECEMLGNEIGLPKRVVQVWFQNARAKERKFKINIGKPFMINQSGTDGTKPECTLCGVKYSARLSIRDHIFSKQHISKVRETVGSQLDREKDYLAPTTVRQLMAQQELDRIKKASDVLGLTVQQQGITDNCSLHGISLQAAYPGLPGLPPVILPGMNGPSSLPGFPQNSNTLTSPGTGMLGFPSSATSSPALSLSSGPTKSLLQTPPPPPPPPPPPSSLSGQQTEPQNKESEKKQTKPNKVKKIKEEESEAIKPEKHPKKEEKISSALTVLGKVVGETHMDPTQLQALQNAIAGDPASFIGGQFLPYFIPGFASYFSPQLPGTVQGGYLPPICGVESLFPYGPAVPQTLAGLSPGALLQQYQQYQQSLQDSLQKQQKQQQEQQQKPVPAKTAKGEGDQPQSSNEASETKEEKSTAPESTKEEVQLDSKSAEFSDTCIVPFVKYEFVCRKCQMMFTDEDATVNHQKSFCYFGQPLIDPQETVLRIPVSKYQCLACDLALSGNEALSQHLQSSLHKEKTIKQAMRNAKEHVRLLPHSVCSPPPNTSSTSPSAASSNNTYPHLSCFSMKSWPNILFQASARKAASSPSSPPSLSLPSTVTSSLCSTSGVQTSLPTESCSDESDSELSQKLQDLDNSLEVKAKPASGLDGNFNSVRMDMFSV.

N-acetylmethionine is present on Met1. Disordered regions lie at residues 1-54 (METC…LKTD), 426-479 (HLSS…AYSN), and 521-614 (TSSS…IECP). Over residues 9-20 (ISRQENGQSTSK) the composition is skewed to polar residues. Composition is skewed to basic and acidic residues over residues 39–54 (EPDR…LKTD) and 433–451 (KMSE…KEST). The segment covering 467-479 (EPGDEDEEDAYSN) has biased composition (acidic residues). Composition is skewed to polar residues over residues 542 to 553 (GRSNGNVTNSYS) and 566 to 576 (RDGTTAAPSET). C2H2-type zinc fingers lie at residues 611–634 (IECP…TMMH), 642–665 (LKCP…KEKH), and 697–721 (FRCE…SDKH). Residues 739–763 (HSAPTPNTSLSGCGTPSPSKPKQKP) are disordered. Over residues 742-752 (PTPNTSLSGCG) the composition is skewed to polar residues. 4 consecutive C2H2-type zinc fingers follow at residues 765 to 787 (RRCE…MTSE), 915 to 939 (YQCK…TDKH), 971 to 993 (LKCN…TTNH), and 1019 to 1043 (YYCA…SVKH). The segment at 1100–1142 (KAASEEPSEDAGDPLKPPTVAEDDEKEAHKRDNSEGKISTKDP) is disordered. Residues 1125–1142 (KEAHKRDNSEGKISTKDP) are compositionally biased toward basic and acidic residues. Lys1165 participates in a covalent cross-link: Glycyl lysine isopeptide (Lys-Gly) (interchain with G-Cter in SUMO2). 2 C2H2-type zinc fingers span residues 1188–1211 (YQYP…LSQH) and 1217–1240 (ICCP…THLH). A disordered region spans residues 1271–1339 (APEKSEQDPP…EWNKTSSKDV (69 aa)). The segment covering 1297–1326 (VDDKSMSGLEDSKVGVEIKNEEQKPAKEPV) has biased composition (basic and acidic residues). Residue Lys1315 forms a Glycyl lysine isopeptide (Lys-Gly) (interchain with G-Cter in SUMO2) linkage. 2 consecutive C2H2-type zinc fingers follow at residues 1368-1390 (YRCN…SQYH) and 1396-1419 (TMCT…EAGH). Positions 1467–1492 (EGKASPVESDGSSIPDDLGLEPKRTL) are disordered. The segment at 1512 to 1538 (YKCTVCKESFTQKNILLVHYNSVSHLH) adopts a C2H2-type 12 zinc-finger fold. Lys1562 is covalently cross-linked (Glycyl lysine isopeptide (Lys-Gly) (interchain with G-Cter in SUMO2)). The C2H2-type 13 zinc-finger motif lies at 1564 to 1588 (YKCSTCSVAYSQSSTLEIHMRSVLH). Positions 1779 to 1873 (PQLQPQNQQP…CIPPPRIASG (95 aa)) are disordered. Residues 1792-1808 (QQQQPQQQPSKLLKQEQ) are compositionally biased toward low complexity. Lys1805 is covalently cross-linked (Glycyl lysine isopeptide (Lys-Gly) (interchain with G-Cter in SUMO2)). Positions 1823-1860 (PSYKEAEEVTEKQEKPKQEFINDTEGLKDSKDIKKQKS) are enriched in basic and acidic residues. A C2H2-type 14 zinc finger spans residues 1916 to 1939 (LECGICGKLFSNVLILKSHQEHVH). A disordered region spans residues 1984–2006 (KIPNTVSAPLQAPPPTPPSAPQQ). Over residues 1994–2003 (QAPPPTPPSA) the composition is skewed to pro residues. DNA-binding regions (homeobox) lie at residues 2069–2128 (FKRP…RQRN) and 2166–2225 (KRSS…RKSY). A C2H2-type 15; degenerate zinc finger spans residues 2252 to 2276 (YQCKKCNVVFPRIFDLITHQKKQCY). The segment covering 2318–2331 (TLVASSGSGTSTPL) has biased composition (polar residues). A disordered region spans residues 2318-2412 (TLVASSGSGT…SQTPIPSSPL (95 aa)). Residues 2337-2355 (PEPEKNSPKTEYPGEKTKQ) are compositionally biased toward basic and acidic residues. Residues 2356–2376 (SDPSLPQGTKSAPSSVLTSSE) are compositionally biased toward polar residues. Residues 2383–2392 (PQPPTQPPKQ) are compositionally biased toward pro residues. Residues 2401 to 2412 (SASQTPIPSSPL) are compositionally biased toward polar residues. The segment at 2430-2452 (YPCDQCTLAFPTLELWKEHQHMH) adopts a C2H2-type 16 zinc-finger fold. The segment covering 2490–2508 (GSSLTQMPPQTSTAHTTAP) has biased composition (polar residues). The tract at residues 2490 to 2545 (GSSLTQMPPQTSTAHTTAPASVAASLKRKLEDKEDNNCSEKEGGNSGEDQHRDKRL) is disordered. Residues 2517 to 2541 (RKLEDKEDNNCSEKEGGNSGEDQHR) are compositionally biased toward basic and acidic residues. The homeobox 3 DNA-binding region spans 2542-2601 (DKRLRTTITPEQLEILYEKYLLDSNPTRKMLDHIAREVGLKKRVVQVWFQNTRARERKGQ). The segment at 2612–2635 (KRCPFCRALFKAKSALESHIRSRH) adopts a C2H2-type 17 zinc-finger fold. A Phosphoserine modification is found at Ser2645. Disordered stretches follow at residues 2746–2791 (AISD…ATTP) and 2810–2866 (HFND…PGHK). The span at 2781 to 2791 (LDSLQKPATTP) shows a compositional bias: polar residues. The segment covering 2811 to 2820 (FNDKDGDHDQ) has biased composition (basic and acidic residues). Over residues 2843 to 2855 (PSSPNPFGSSNPF) the composition is skewed to low complexity. Residues 2865–2924 (HKRFRTQMSNLQLKVLKACFSDYRTPTMQECEMLGNEIGLPKRVVQVWFQNARAKERKFK) constitute a DNA-binding region (homeobox 4). Residues 2943–2967 (PECTLCGVKYSARLSIRDHIFSKQH) form a C2H2-type 18 zinc finger. Disordered regions lie at residues 3051–3156 (PSSL…EEKI) and 3261–3318 (QDSL…VQLD). The span at 3058 to 3068 (PQNSNTLTSPG) shows a compositional bias: polar residues. The span at 3075–3088 (PSSATSSPALSLSS) shows a compositional bias: low complexity. Positions 3097-3109 (TPPPPPPPPPPPS) are enriched in pro residues. Over residues 3136 to 3156 (IKEEESEAIKPEKHPKKEEKI) the composition is skewed to basic and acidic residues. Lys3137 participates in a covalent cross-link: Glycyl lysine isopeptide (Lys-Gly) (interchain with G-Cter in SUMO2). Residues 3248 to 3277 (ALLQQYQQYQQSLQDSLQKQQKQQQEQQQK) adopt a coiled-coil conformation. Low complexity predominate over residues 3261 to 3276 (QDSLQKQQKQQQEQQQ). Over residues 3298 to 3318 (SETKEEKSTAPESTKEEVQLD) the composition is skewed to basic and acidic residues. A C2H2-type 19; degenerate zinc finger spans residues 3337–3361 (FVCRKCQMMFTDEDATVNHQKSFCY). Residues 3381–3405 (YQCLACDLALSGNEALSQHLQSSLH) form a C2H2-type 20 zinc finger. The segment at 3424–3445 (LPHSVCSPPPNTSSTSPSAASS) is disordered. Residues 3435 to 3445 (TSSTSPSAASS) show a composition bias toward low complexity.

This sequence belongs to the krueppel C2H2-type zinc-finger protein family. As to expression, expressed in brain, heart, lung, muscle and small intestine. No expression detected in undifferentiated P19 cells, however, expression was seen following retinoic acid treatment to induce neuronal differentiation. Expressed in undifferentiated C2C12 cells, following induction of muscle differentiation in a low-serum medium, expression levels were decreased.

It is found in the nucleus. In terms of biological role, may play a role in neural and muscle differentiation. May be involved in transcriptional regulation. The sequence is that of Zinc finger homeobox protein 4 (Zfhx4) from Mus musculus (Mouse).